The chain runs to 462 residues: uncharacterized protein (462 aa).

The TRAM domain occupies 12–70; that stretch reads MLKKNDIIQVAISDLSHEGAGVAKHDGFVFFVDNALPEEVIDMRVLKVNKNSGFGKVEA. Positions 294, 323, 344, and 392 each coordinate S-adenosyl-L-methionine. Cys419 acts as the Nucleophile in catalysis.

The protein belongs to the class I-like SAM-binding methyltransferase superfamily. RNA M5U methyltransferase family.

This is an uncharacterized protein from Streptococcus pyogenes serotype M18 (strain MGAS8232).